A 75-amino-acid polypeptide reads, in one-letter code: Exodeoxyribonuclease 7 small subunit (75 aa).

Belongs to the XseB family. In terms of assembly, heterooligomer composed of large and small subunits.

The protein resides in the cytoplasm. It catalyses the reaction Exonucleolytic cleavage in either 5'- to 3'- or 3'- to 5'-direction to yield nucleoside 5'-phosphates.. Its function is as follows. Bidirectionally degrades single-stranded DNA into large acid-insoluble oligonucleotides, which are then degraded further into small acid-soluble oligonucleotides. The chain is Exodeoxyribonuclease 7 small subunit from Listeria welshimeri serovar 6b (strain ATCC 35897 / DSM 20650 / CCUG 15529 / CIP 8149 / NCTC 11857 / SLCC 5334 / V8).